A 942-amino-acid polypeptide reads, in one-letter code: UvrABC system protein A (942 aa).

32–39 contributes to the ATP binding site; that stretch reads GLSGSGKS. A C4-type zinc finger spans residues 251–278; sequence CPVCGFTVPELEPRLFSFNAPFGSCPTC. 2 consecutive ABC transporter domains span residues 308 to 589 and 609 to 937; these read WNPI…KKSI and GNGR…HYLK. 641 to 648 contributes to the ATP binding site; the sequence is GVSGSGKS. The segment at 740 to 766 adopts a C4-type zinc-finger fold; sequence CEACSGDGIIKIEMHFLPDVYVPCEVC.

This sequence belongs to the ABC transporter superfamily. UvrA family. Forms a heterotetramer with UvrB during the search for lesions.

The protein resides in the cytoplasm. In terms of biological role, the UvrABC repair system catalyzes the recognition and processing of DNA lesions. UvrA is an ATPase and a DNA-binding protein. A damage recognition complex composed of 2 UvrA and 2 UvrB subunits scans DNA for abnormalities. When the presence of a lesion has been verified by UvrB, the UvrA molecules dissociate. This Streptococcus pyogenes serotype M6 (strain ATCC BAA-946 / MGAS10394) protein is UvrABC system protein A.